Reading from the N-terminus, the 338-residue chain is DNA-directed RNA polymerase subunit alpha (338 aa).

An alpha N-terminal domain (alpha-NTD) region spans residues 1 to 234 (MIHKNWAELI…DQLSVFVNFD (234 aa)). The tract at residues 250–338 (FDPRLLKKVD…DLAKRFDDQF (89 aa)) is alpha C-terminal domain (alpha-CTD).

It belongs to the RNA polymerase alpha chain family. As to quaternary structure, homodimer. The RNAP catalytic core consists of 2 alpha, 1 beta, 1 beta' and 1 omega subunit. When a sigma factor is associated with the core the holoenzyme is formed, which can initiate transcription.

It carries out the reaction RNA(n) + a ribonucleoside 5'-triphosphate = RNA(n+1) + diphosphate. Functionally, DNA-dependent RNA polymerase catalyzes the transcription of DNA into RNA using the four ribonucleoside triphosphates as substrates. The protein is DNA-directed RNA polymerase subunit alpha of Paracoccus denitrificans (strain Pd 1222).